An 860-amino-acid polypeptide reads, in one-letter code: DNA mismatch repair protein MutS (860 aa).

Residue 607 to 614 (GPNMSGKS) coordinates ATP.

Belongs to the DNA mismatch repair MutS family.

Its function is as follows. This protein is involved in the repair of mismatches in DNA. It is possible that it carries out the mismatch recognition step. This protein has a weak ATPase activity. This is DNA mismatch repair protein MutS from Listeria monocytogenes serotype 4a (strain HCC23).